A 380-amino-acid chain; its full sequence is Guanine nucleotide-binding protein subunit beta (380 aa).

7 WD repeats span residues Gly64–Ala103, Leu106–Gly145, Gly155–Ile195, Gly203–Arg243, Gly247–Val286, Asn296–Asn335, and Ser342–Val380.

This sequence belongs to the WD repeat G protein beta family. As to quaternary structure, g proteins are composed of 3 units, alpha, beta and gamma. Interacts with the gamma subunits RGG1 and RGG2.

The protein localises to the cell membrane. In terms of biological role, guanine nucleotide-binding proteins (G proteins) are involved as modulators or transducers in various transmembrane signaling systems. The beta and gamma chains are required for the GTPase activity, for replacement of GDP by GTP, and for G protein-effector interaction. The polypeptide is Guanine nucleotide-binding protein subunit beta (Oryza sativa subsp. indica (Rice)).